A 167-amino-acid chain; its full sequence is Small ribosomal subunit protein uS5 (167 aa).

In terms of domain architecture, S5 DRBM spans 11–74 (LQEKLIAVNR…EKARRAMINV (64 aa)).

The protein belongs to the universal ribosomal protein uS5 family. As to quaternary structure, part of the 30S ribosomal subunit. Contacts proteins S4 and S8.

In terms of biological role, with S4 and S12 plays an important role in translational accuracy. Its function is as follows. Located at the back of the 30S subunit body where it stabilizes the conformation of the head with respect to the body. This is Small ribosomal subunit protein uS5 from Serratia proteamaculans (strain 568).